The following is a 180-amino-acid chain: Stathmin-3 (180 aa).

S-palmitoyl cysteine attachment occurs at residues Cys-22 and Cys-24. In terms of domain architecture, SLD spans 38 to 180 (GDMEVKQLDK…NKEQREEMSG (143 aa)). Ser-50, Ser-60, Ser-65, Ser-68, Ser-72, Ser-73, and Ser-81 each carry phosphoserine. Positions 58–82 (LKSPSDLSPESPMLSSPPKRKDTSL) are disordered. The segment covering 60-74 (SPSDLSPESPMLSSP) has biased composition (low complexity). The stretch at 76-179 (KRKDTSLEEL…RNKEQREEMS (104 aa)) forms a coiled coil.

This sequence belongs to the stathmin family. In terms of assembly, interacts with STAT3. Interacts with CLU (secreted form); this interaction may act as an important modulator during neuronal differentiation. N-terminal palmitoylation promotes specific anchoring to the cytosolic leaflet of Golgi membranes and subsequent vesicular trafficking along dendrites and axons. Neuronal Stathmins are substrates for palmitoyltransferases ZDHHC3, ZDHHC7 and ZDHHC15.

The protein resides in the golgi apparatus. It localises to the cell projection. It is found in the growth cone. Its subcellular location is the axon. The protein localises to the cytoplasm. The protein resides in the cytosol. Exhibits microtubule-destabilizing activity, which is antagonized by STAT3. This chain is Stathmin-3 (STMN3), found in Bos taurus (Bovine).